Consider the following 529-residue polypeptide: Isoleucine--tRNA ligase (529 aa).

Position 482 (Glu482) interacts with L-isoleucyl-5'-AMP. Positions 523–527 match the 'KMSKS' region motif; that stretch reads KMSKS. Lys526 is a binding site for ATP.

The protein belongs to the class-I aminoacyl-tRNA synthetase family. IleS type 1 subfamily. As to quaternary structure, monomer.

The protein localises to the cytoplasm. The enzyme catalyses tRNA(Ile) + L-isoleucine + ATP = L-isoleucyl-tRNA(Ile) + AMP + diphosphate. Functionally, catalyzes the attachment of isoleucine to tRNA(Ile). As IleRS can inadvertently accommodate and process structurally similar amino acids such as valine, to avoid such errors it has two additional distinct tRNA(Ile)-dependent editing activities. One activity is designated as 'pretransfer' editing and involves the hydrolysis of activated Val-AMP. The other activity is designated 'posttransfer' editing and involves deacylation of mischarged Val-tRNA(Ile). The chain is Isoleucine--tRNA ligase (ileS) from Aquifex pyrophilus.